Reading from the N-terminus, the 135-residue chain is Flagellar assembly factor FliW 2 (135 aa).

This sequence belongs to the FliW family. Interacts with translational regulator CsrA and flagellin(s).

The protein localises to the cytoplasm. Functionally, acts as an anti-CsrA protein, binds CsrA and prevents it from repressing translation of its target genes, one of which is flagellin. Binds to flagellin and participates in the assembly of the flagellum. The polypeptide is Flagellar assembly factor FliW 2 (Helicobacter acinonychis (strain Sheeba)).